A 450-amino-acid polypeptide reads, in one-letter code: Probable ECA polymerase (450 aa).

The next 11 helical transmembrane spans lie at 6-26 (FSGL…LTWF), 37-57 (VFFS…TSVL), 63-83 (VGVA…CFYA), 118-138 (VILM…NGFL), 155-175 (GVAL…VYFL), 181-201 (AWLF…MIVG), 207-227 (IIIA…ISLW), 228-248 (MLAA…LKRY), 341-361 (LVVM…GLII), 378-398 (YKAA…IVLA), and 410-430 (VFFI…YWLF).

The protein belongs to the WzyE family. Probably part of a complex composed of WzxE, WzyE and WzzE.

The protein resides in the cell inner membrane. The protein operates within bacterial outer membrane biogenesis; enterobacterial common antigen biosynthesis. Functionally, probably involved in the polymerization of enterobacterial common antigen (ECA) trisaccharide repeat units. The protein is Probable ECA polymerase of Shigella sonnei (strain Ss046).